The sequence spans 138 residues: L-ectoine synthase (138 aa).

Belongs to the ectoine synthase family.

The catalysed reaction is (2S)-4-acetamido-2-aminobutanoate = L-ectoine + H2O. Its pathway is amine and polyamine biosynthesis; ectoine biosynthesis; L-ectoine from L-aspartate 4-semialdehyde: step 3/3. In terms of biological role, catalyzes the circularization of gamma-N-acetyl-alpha,gamma-diaminobutyric acid (ADABA) to ectoine (1,4,5,6-tetrahydro-2-methyl-4-pyrimidine carboxylic acid), which is an excellent osmoprotectant. The chain is L-ectoine synthase from Vibrio cholerae serotype O1 (strain ATCC 39541 / Classical Ogawa 395 / O395).